Reading from the N-terminus, the 390-residue chain is Chorismate synthase (390 aa).

2 residues coordinate NADP(+): R48 and R54. Residues 132–134, 244–245, G289, 304–308, and R330 each bind FMN; these read RSS, NA, and KPTSS. The disordered stretch occupies residues 362–390; that stretch reads VGAHPAGAHPAGADPAGTHPGGPGGFQPG. Positions 363–379 are enriched in low complexity; sequence GAHPAGAHPAGADPAGT. Positions 380-390 are enriched in gly residues; it reads HPGGPGGFQPG.

The protein belongs to the chorismate synthase family. In terms of assembly, homotetramer. The cofactor is FMNH2.

The catalysed reaction is 5-O-(1-carboxyvinyl)-3-phosphoshikimate = chorismate + phosphate. It functions in the pathway metabolic intermediate biosynthesis; chorismate biosynthesis; chorismate from D-erythrose 4-phosphate and phosphoenolpyruvate: step 7/7. Catalyzes the anti-1,4-elimination of the C-3 phosphate and the C-6 proR hydrogen from 5-enolpyruvylshikimate-3-phosphate (EPSP) to yield chorismate, which is the branch point compound that serves as the starting substrate for the three terminal pathways of aromatic amino acid biosynthesis. This reaction introduces a second double bond into the aromatic ring system. In Methylobacterium sp. (strain 4-46), this protein is Chorismate synthase.